A 526-amino-acid chain; its full sequence is Nucleolar complex protein 4 homolog A (526 aa).

Transmembrane regions (helical) follow at residues A307–I327, F358–A378, and L386–I406.

It belongs to the CBF/MAK21 family.

The protein resides in the nucleus membrane. Its subcellular location is the nucleus. It is found in the nucleolus. The sequence is that of Nucleolar complex protein 4 homolog A (noc4l-a) from Xenopus laevis (African clawed frog).